Consider the following 310-residue polypeptide: Aspartate carbamoyltransferase catalytic subunit (310 aa).

Residues Arg-55 and Thr-56 each contribute to the carbamoyl phosphate site. Residue Lys-85 participates in L-aspartate binding. Residues Arg-106, His-135, and Gln-138 each coordinate carbamoyl phosphate. The L-aspartate site is built by Arg-168 and Arg-230. Residues Leu-268 and Pro-269 each coordinate carbamoyl phosphate.

This sequence belongs to the aspartate/ornithine carbamoyltransferase superfamily. ATCase family. In terms of assembly, heterododecamer (2C3:3R2) of six catalytic PyrB chains organized as two trimers (C3), and six regulatory PyrI chains organized as three dimers (R2).

The enzyme catalyses carbamoyl phosphate + L-aspartate = N-carbamoyl-L-aspartate + phosphate + H(+). Its pathway is pyrimidine metabolism; UMP biosynthesis via de novo pathway; (S)-dihydroorotate from bicarbonate: step 2/3. Its function is as follows. Catalyzes the condensation of carbamoyl phosphate and aspartate to form carbamoyl aspartate and inorganic phosphate, the committed step in the de novo pyrimidine nucleotide biosynthesis pathway. This chain is Aspartate carbamoyltransferase catalytic subunit, found in Buchnera aphidicola subsp. Acyrthosiphon pisum (strain 5A).